Here is a 75-residue protein sequence, read N- to C-terminus: Brevinin-2SN1 (75 aa).

Positions 1 to 22 (MFTMKKPLLFLFFLGTISLSFC) are cleaved as a signal peptide. A propeptide spans 23 to 40 (EEERGADEDDEVEMTEEE) (removed in mature form). C69 and C75 are disulfide-bonded.

The protein belongs to the frog skin active peptide (FSAP) family. Brevinin subfamily. In terms of tissue distribution, expressed by the skin glands.

It is found in the secreted. Antimicrobial peptide. Active against some Gram-negative and a variety of Gram-positive bacterial strains. Active against fungus C.glabrata 090902 but not against C.albicans ATCC 10231. Shows hemolytic activity against human erythrocytes. The protein is Brevinin-2SN1 of Sylvirana spinulosa (Fine-spined frog).